A 97-amino-acid chain; its full sequence is Exodeoxyribonuclease 7 small subunit (97 aa).

Residues 1 to 22 (MAKTASPGATPPDNGTEPLPDN) form a disordered region.

The protein belongs to the XseB family. In terms of assembly, heterooligomer composed of large and small subunits.

The protein resides in the cytoplasm. It catalyses the reaction Exonucleolytic cleavage in either 5'- to 3'- or 3'- to 5'-direction to yield nucleoside 5'-phosphates.. Bidirectionally degrades single-stranded DNA into large acid-insoluble oligonucleotides, which are then degraded further into small acid-soluble oligonucleotides. This chain is Exodeoxyribonuclease 7 small subunit, found in Burkholderia ambifaria (strain MC40-6).